Reading from the N-terminus, the 205-residue chain is Guanylate kinase (205 aa).

A Guanylate kinase-like domain is found at 3–181; the sequence is GSLYIISAPS…ALSELHSIFL (179 aa). Position 10-17 (10-17) interacts with ATP; sequence APSGAGKT.

This sequence belongs to the guanylate kinase family.

The protein resides in the cytoplasm. The catalysed reaction is GMP + ATP = GDP + ADP. Its function is as follows. Essential for recycling GMP and indirectly, cGMP. This is Guanylate kinase from Hydrogenovibrio crunogenus (strain DSM 25203 / XCL-2) (Thiomicrospira crunogena).